A 453-amino-acid chain; its full sequence is Bifunctional protein GlmU (453 aa).

Positions 1-228 (MPHWAAVIMA…VHEALGINSR (228 aa)) are pyrophosphorylase. Residues Lys-23, Gln-73, 78-79 (GT), 100-102 (SGD), Gly-139, Glu-153, Asn-168, and Asn-226 each bind UDP-N-acetyl-alpha-D-glucosamine. Asp-102 is a binding site for Mg(2+). Asn-226 provides a ligand contact to Mg(2+). A linker region spans residues 229–249 (AQLAAAEDVARQRILSYWMEE). An N-acetyltransferase region spans residues 250–453 (GVTIIDPRST…IENWVRNKKK (204 aa)). Residues Arg-331 and Lys-349 each coordinate UDP-N-acetyl-alpha-D-glucosamine. The active-site Proton acceptor is His-361. UDP-N-acetyl-alpha-D-glucosamine-binding residues include Tyr-364 and Asn-375. Residues Ala-378, 384-385 (NY), Ser-403, Ala-421, and Arg-438 each bind acetyl-CoA.

The protein in the N-terminal section; belongs to the N-acetylglucosamine-1-phosphate uridyltransferase family. This sequence in the C-terminal section; belongs to the transferase hexapeptide repeat family. As to quaternary structure, homotrimer. Mg(2+) serves as cofactor.

The protein resides in the cytoplasm. It carries out the reaction alpha-D-glucosamine 1-phosphate + acetyl-CoA = N-acetyl-alpha-D-glucosamine 1-phosphate + CoA + H(+). It catalyses the reaction N-acetyl-alpha-D-glucosamine 1-phosphate + UTP + H(+) = UDP-N-acetyl-alpha-D-glucosamine + diphosphate. The protein operates within nucleotide-sugar biosynthesis; UDP-N-acetyl-alpha-D-glucosamine biosynthesis; N-acetyl-alpha-D-glucosamine 1-phosphate from alpha-D-glucosamine 6-phosphate (route II): step 2/2. It functions in the pathway nucleotide-sugar biosynthesis; UDP-N-acetyl-alpha-D-glucosamine biosynthesis; UDP-N-acetyl-alpha-D-glucosamine from N-acetyl-alpha-D-glucosamine 1-phosphate: step 1/1. It participates in bacterial outer membrane biogenesis; LPS lipid A biosynthesis. In terms of biological role, catalyzes the last two sequential reactions in the de novo biosynthetic pathway for UDP-N-acetylglucosamine (UDP-GlcNAc). The C-terminal domain catalyzes the transfer of acetyl group from acetyl coenzyme A to glucosamine-1-phosphate (GlcN-1-P) to produce N-acetylglucosamine-1-phosphate (GlcNAc-1-P), which is converted into UDP-GlcNAc by the transfer of uridine 5-monophosphate (from uridine 5-triphosphate), a reaction catalyzed by the N-terminal domain. In Desulfitobacterium hafniense (strain DSM 10664 / DCB-2), this protein is Bifunctional protein GlmU.